The primary structure comprises 130 residues: Small ribosomal subunit protein uS9 (130 aa).

The segment at 111-130 is disordered; it reads KERRKYGLKKARKAPQFSKR.

This sequence belongs to the universal ribosomal protein uS9 family.

The sequence is that of Small ribosomal subunit protein uS9 from Thermoanaerobacter sp. (strain X514).